A 269-amino-acid polypeptide reads, in one-letter code: Bidirectional sugar transporter SWEET1a (269 aa).

At 1-6 the chain is on the extracellular side; the sequence is MEHIAR. A helical membrane pass occupies residues 7–27; sequence FFFGVSGNVIALFLFLSPVVT. Residues 8–96 enclose the MtN3/slv 1 domain; the sequence is FFGVSGNVIA…IFLIFAVDRR (89 aa). The Cytoplasmic portion of the chain corresponds to 28–42; the sequence is FWRIIRKRSTEDFSG. Residues 43 to 63 traverse the membrane as a helical segment; the sequence is VPYNMTLLNCLLSAWYGLPFV. The Extracellular segment spans residues 64 to 72; the sequence is SPNNILVST. A helical membrane pass occupies residues 73 to 93; sequence INGTGSVIEAIYVVIFLIFAV. At 94 to 100 the chain is on the cytoplasmic side; that stretch reads DRRARLR. Residues 101 to 121 traverse the membrane as a helical segment; sequence MLGLLSIVVSIFATVVLVSLL. Over 122-129 the chain is Extracellular; that stretch reads ALHGNARK. Residues 130–150 form a helical membrane-spanning segment; that stretch reads VFCGLAATIFSICMYASPLSI. Positions 132-215 constitute a MtN3/slv 2 domain; that stretch reads CGLAATIFSI…ILYFIYRKNK (84 aa). At 151-164 the chain is on the cytoplasmic side; that stretch reads MRLVIKTKSVEYMP. Residues 165 to 185 form a helical membrane-spanning segment; that stretch reads FLLSLAVFLCGTSWFIYGLLG. The Extracellular segment spans residues 186–189; it reads RDPF. The helical transmembrane segment at 190–210 threads the bilayer; the sequence is IIIPNGCGSFLGLVQLILYFI. The Cytoplasmic portion of the chain corresponds to 211–269; it reads YRKNKGPAVPAGKGEAAAAADVEDAKKVAAAVEMADATTTNKAAADTVVGDGKVVASQV.

It belongs to the SWEET sugar transporter family. In terms of assembly, forms homooligomers and/or heterooligomers.

The protein localises to the cell membrane. Functionally, mediates both low-affinity uptake and efflux of sugar across the plasma membrane. The polypeptide is Bidirectional sugar transporter SWEET1a (Sorghum bicolor (Sorghum)).